The primary structure comprises 354 residues: UDP-glucose 4-epimerase GEPI42 (354 aa).

Position 11–42 (11–42) interacts with NAD(+); the sequence is TILVTGGAGFIGSHTVVQLLKQGFHVSIIDNL. Ser-137 serves as a coordination point for substrate. Tyr-161 serves as the catalytic Proton acceptor.

This sequence belongs to the NAD(P)-dependent epimerase/dehydratase family. Requires NAD(+) as cofactor.

The catalysed reaction is UDP-alpha-D-glucose = UDP-alpha-D-galactose. It functions in the pathway carbohydrate metabolism; galactose metabolism. In Cyamopsis tetragonoloba (Guar), this protein is UDP-glucose 4-epimerase GEPI42.